A 363-amino-acid chain; its full sequence is Putative agmatine deiminase (363 aa).

Positions 1–10 (MTKQLSTSPK) are enriched in polar residues. Residues 1–20 (MTKQLSTSPKQDGFRMPAEH) form a disordered region. Cys-355 serves as the catalytic Amidino-cysteine intermediate.

Belongs to the agmatine deiminase family.

It catalyses the reaction agmatine + H2O = N-carbamoylputrescine + NH4(+). The chain is Putative agmatine deiminase from Photobacterium profundum (strain SS9).